The sequence spans 566 residues: DNA ligase B (566 aa).

The active-site N6-AMP-lysine intermediate is the Lys125.

The protein belongs to the NAD-dependent DNA ligase family. LigB subfamily.

The enzyme catalyses NAD(+) + (deoxyribonucleotide)n-3'-hydroxyl + 5'-phospho-(deoxyribonucleotide)m = (deoxyribonucleotide)n+m + AMP + beta-nicotinamide D-nucleotide.. Catalyzes the formation of phosphodiester linkages between 5'-phosphoryl and 3'-hydroxyl groups in double-stranded DNA using NAD as a coenzyme and as the energy source for the reaction. The sequence is that of DNA ligase B from Pseudomonas putida (strain ATCC 700007 / DSM 6899 / JCM 31910 / BCRC 17059 / LMG 24140 / F1).